Here is a 377-residue protein sequence, read N- to C-terminus: GDSL esterase/lipase 4 (377 aa).

The N-terminal stretch at 1-21 is a signal peptide; it reads MASPRFNSIIIILFICTISLS. The Nucleophile role is filled by S44. 5 N-linked (GlcNAc...) asparagine glycosylation sites follow: N135, N188, N194, N207, and N241. Active-site residues include D342 and H345. N364 carries an N-linked (GlcNAc...) asparagine glycan.

This sequence belongs to the 'GDSL' lipolytic enzyme family.

The protein localises to the secreted. The protein is GDSL esterase/lipase 4 (GLIP4) of Arabidopsis thaliana (Mouse-ear cress).